The chain runs to 772 residues: Ion-translocating oxidoreductase complex subunit C (772 aa).

4Fe-4S ferredoxin-type domains follow at residues 369 to 397 and 407 to 436; these read GEPQ…QQLY and KATT…VQYF. Residues C377, C380, C383, C387, C416, C419, C422, and C426 each coordinate [4Fe-4S] cluster. 3 disordered regions span residues 602-684, 696-717, and 727-746; these read KLEQ…DPRK, ARKL…PRKA, and KARK…QVDP. Positions 605–615 are enriched in low complexity; the sequence is QQQANAEPEQQ.

The protein belongs to the 4Fe4S bacterial-type ferredoxin family. RnfC subfamily. In terms of assembly, the complex is composed of six subunits: RsxA, RsxB, RsxC, RsxD, RsxE and RsxG. The cofactor is [4Fe-4S] cluster.

Its subcellular location is the cell inner membrane. Part of a membrane-bound complex that couples electron transfer with translocation of ions across the membrane. Required to maintain the reduced state of SoxR. The polypeptide is Ion-translocating oxidoreductase complex subunit C (Escherichia coli O157:H7 (strain EC4115 / EHEC)).